We begin with the raw amino-acid sequence, 126 residues long: Hydrogenase maturation factor HypA (126 aa).

Position 2 (His2) interacts with Ni(2+). Zn(2+)-binding residues include Cys78, Cys81, Cys97, and Cys100.

Belongs to the HypA/HybF family.

Involved in the maturation of [NiFe] hydrogenases. Required for nickel insertion into the metal center of the hydrogenase. The chain is Hydrogenase maturation factor HypA from Methanococcus maripaludis (strain C6 / ATCC BAA-1332).